The sequence spans 479 residues: HSPB1-associated protein 1 (479 aa).

Residues 1-25 (MEAGCEGSSPQTLGERTMGEEGERV) are disordered. The interaction with HSPB1 stretch occupies residues 88 to 208 (ETECSYVDAT…EDTPFLYPTR (121 aa)). A JmjC domain is found at 124–288 (WAYADYKYFV…HLARVEEAVT (165 aa)). Residues 347–412 (PRANGEEPGV…GDSQECTSRN (66 aa)) are disordered. The span at 356-369 (VQEHMEVEQARDPS) shows a compositional bias: basic and acidic residues.

Interacts with CRYAB and HSPB1. Widely expressed. Highly expressed by Sertoli cells in testis (at protein level).

Its subcellular location is the cytoplasm. Functionally, may play a role in cellular stress response. This Rattus norvegicus (Rat) protein is HSPB1-associated protein 1 (Hspbap1).